A 57-amino-acid chain; its full sequence is uncharacterized protein (57 aa).

Residues 21–37 (GTYTLVVAFVLAFLVYS) form a helical membrane-spanning segment.

It is found in the host membrane. This is an uncharacterized protein from Human herpesvirus 6B (strain Z29) (HHV-6 variant B).